We begin with the raw amino-acid sequence, 146 residues long: Hemoglobin subunit beta-1 (146 aa).

A Globin domain is found at 2–146; sequence EWTDKERAII…VVSALGKQYH (145 aa). The heme b site is built by H63 and H92.

The protein belongs to the globin family. In terms of assembly, hb 1 is a heterotetramer of two alpha-1 and two beta-1 chains. Red blood cells.

Its function is as follows. Involved in oxygen transport from gills to the various peripheral tissues. The protein is Hemoglobin subunit beta-1 (hbb1) of Gobionotothen gibberifrons (Humped rockcod).